Consider the following 61-residue polypeptide: Photosystem II reaction center protein K (61 aa).

Residues 1 to 24 (MLNIFSLIWICLNSALYSSGFFFG) constitute a propeptide that is removed on maturation. The chain crosses the membrane as a helical span at residues 36 to 56 (IIDFMPVIPVFFFLLAFVWQA).

It belongs to the PsbK family. As to quaternary structure, PSII is composed of 1 copy each of membrane proteins PsbA, PsbB, PsbC, PsbD, PsbE, PsbF, PsbH, PsbI, PsbJ, PsbK, PsbL, PsbM, PsbT, PsbX, PsbY, PsbZ, Psb30/Ycf12, at least 3 peripheral proteins of the oxygen-evolving complex and a large number of cofactors. It forms dimeric complexes.

It localises to the plastid. The protein resides in the chloroplast thylakoid membrane. Its function is as follows. One of the components of the core complex of photosystem II (PSII). PSII is a light-driven water:plastoquinone oxidoreductase that uses light energy to abstract electrons from H(2)O, generating O(2) and a proton gradient subsequently used for ATP formation. It consists of a core antenna complex that captures photons, and an electron transfer chain that converts photonic excitation into a charge separation. The protein is Photosystem II reaction center protein K of Coffea arabica (Arabian coffee).